An 89-amino-acid chain; its full sequence is Small ribosomal subunit protein uS15 (89 aa).

Over residues 1 to 18 (MALSAQEKDAIVKEHQTS) the composition is skewed to basic and acidic residues. The interval 1–25 (MALSAQEKDAIVKEHQTSETDTGSP) is disordered.

This sequence belongs to the universal ribosomal protein uS15 family. In terms of assembly, part of the 30S ribosomal subunit. Forms a bridge to the 50S subunit in the 70S ribosome, contacting the 23S rRNA.

One of the primary rRNA binding proteins, it binds directly to 16S rRNA where it helps nucleate assembly of the platform of the 30S subunit by binding and bridging several RNA helices of the 16S rRNA. Functionally, forms an intersubunit bridge (bridge B4) with the 23S rRNA of the 50S subunit in the ribosome. The protein is Small ribosomal subunit protein uS15 of Teredinibacter turnerae (strain ATCC 39867 / T7901).